A 502-amino-acid polypeptide reads, in one-letter code: Serine/threonine-protein kinase SKS1 (502 aa).

The 329-residue stretch at 10-338 (FRITAQIGSG…SEVSSLTSFT (329 aa)) folds into the Protein kinase domain. Residues 16 to 24 (IGSGAYGLV) and Lys-39 each bind ATP. Asp-186 functions as the Proton acceptor in the catalytic mechanism. Composition is skewed to low complexity over residues 376–391 (QEQQ…QVQE) and 399–410 (EQIQNQEQAQQQ). The segment at 376–439 (QEQQQQQQQQ…GSMEKYEYTN (64 aa)) is disordered. The segment covering 411 to 420 (QEEEDAEPES) has biased composition (acidic residues).

It belongs to the protein kinase superfamily. Ser/Thr protein kinase family.

The catalysed reaction is L-seryl-[protein] + ATP = O-phospho-L-seryl-[protein] + ADP + H(+). The enzyme catalyses L-threonyl-[protein] + ATP = O-phospho-L-threonyl-[protein] + ADP + H(+). Its function is as follows. May have a role in glucose regulation. The polypeptide is Serine/threonine-protein kinase SKS1 (SKS1) (Saccharomyces cerevisiae (strain ATCC 204508 / S288c) (Baker's yeast)).